A 115-amino-acid polypeptide reads, in one-letter code: Protein Diedel (115 aa).

An N-terminal signal peptide occupies residues 1 to 24; the sequence is MASPVVSLLLVGICALAFVHVARS. Cystine bridges form between Cys-26–Cys-81, Cys-27–Cys-87, Cys-42–Cys-55, Cys-60–Cys-71, and Cys-76–Cys-83.

This sequence belongs to the Diedel family. In terms of tissue distribution, detected in hemolymph (at protein level). Also expressed in the fat body and is probably synthesized in the fat body and secreted into the hemolymph.

The protein resides in the secreted. Functionally, cytokine which promotes survival following infection by Sindbis virus by suppressing the immune deficiency pathway. Following infection by the enteropathogenic bacteria E.carotovora limits intestinal stem cells proliferation. When secreted from muscle or adipose tissue, can attenuate age-related intestinal tissue degeneration by inhibiting apoptosis. In Drosophila melanogaster (Fruit fly), this protein is Protein Diedel.